The following is a 203-amino-acid chain: Holliday junction branch migration complex subunit RuvA (203 aa).

Positions 1-64 are domain I; that stretch reads MIGRLRGIIL…EDAQLLYGFN (64 aa). The segment at 65 to 142 is domain II; it reads NKQERMLFRE…KGLHGDLFTP (78 aa). The interval 143-154 is flexible linker; that stretch reads AADLVLTSPNGP. The domain III stretch occupies residues 155–203; it reads TSDDAEQEAVAALVALGYKPQEASRMVSKIAKPDANSETLIREALRAAL.

This sequence belongs to the RuvA family. In terms of assembly, homotetramer. Forms an RuvA(8)-RuvB(12)-Holliday junction (HJ) complex. HJ DNA is sandwiched between 2 RuvA tetramers; dsDNA enters through RuvA and exits via RuvB. An RuvB hexamer assembles on each DNA strand where it exits the tetramer. Each RuvB hexamer is contacted by two RuvA subunits (via domain III) on 2 adjacent RuvB subunits; this complex drives branch migration. In the full resolvosome a probable DNA-RuvA(4)-RuvB(12)-RuvC(2) complex forms which resolves the HJ.

Its subcellular location is the cytoplasm. Functionally, the RuvA-RuvB-RuvC complex processes Holliday junction (HJ) DNA during genetic recombination and DNA repair, while the RuvA-RuvB complex plays an important role in the rescue of blocked DNA replication forks via replication fork reversal (RFR). RuvA specifically binds to HJ cruciform DNA, conferring on it an open structure. The RuvB hexamer acts as an ATP-dependent pump, pulling dsDNA into and through the RuvAB complex. HJ branch migration allows RuvC to scan DNA until it finds its consensus sequence, where it cleaves and resolves the cruciform DNA. The polypeptide is Holliday junction branch migration complex subunit RuvA (Enterobacter sp. (strain 638)).